A 339-amino-acid polypeptide reads, in one-letter code: tRNA (cytidine(56)-2'-O)-methyltransferase (339 aa).

Residues leucine 79 and 105–109 (GSEKV) contribute to the S-adenosyl-L-methionine site. Residues 188–295 (LIEHVKAVEG…VAQADNLFAG (108 aa)) form the HD domain.

Belongs to the aTrm56 family. As to quaternary structure, homodimer.

Its subcellular location is the cytoplasm. It carries out the reaction cytidine(56) in tRNA + S-adenosyl-L-methionine = 2'-O-methylcytidine(56) in tRNA + S-adenosyl-L-homocysteine + H(+). In terms of biological role, specifically catalyzes the AdoMet-dependent 2'-O-ribose methylation of cytidine at position 56 in tRNAs. The polypeptide is tRNA (cytidine(56)-2'-O)-methyltransferase (Thermoplasma acidophilum (strain ATCC 25905 / DSM 1728 / JCM 9062 / NBRC 15155 / AMRC-C165)).